A 483-amino-acid polypeptide reads, in one-letter code: MQQTPLFKNHYFHQLPEFYTALQPKPLHGARLLYHSEGLAAELGLSSDWFTPEQDAVWSGERLLPGMEPLAQVYSGHQFGMWAGQLGDGRGILLGEQQLADGRSMDWHLKGAGLTPYSRMGDGRAVLRSVIREFLASEAMHHLGIPTTRALTIVTSTHPVQREQEEKGAMLMRVAESHVRFGHFEHFYYRREPEKVRQLVEYVIARHWPQWENDERRYELWFGDVVERTARLITHWQAVGFSHGVMNTDNMSILGLTIDYGPYGFLDAYQPNFICNHSDHRGRYAFDNQPAVGLWNLHRLAQALSGLMDTDTLERALARYEPALMQHYGTLMRAKLGLFTASAEDNDVLVGLLRLMQQEGSDYTHTFRLLADSEKQASRAPLRDEFIDRAAFDSWFATYRQRLMQEEQGDEERRRLMNTTNPKFILRNYLAQMAIERAENDDISVLARLHQALCQPFDEQPDKNDLAALPPEWGKHLEISCSS.

ATP contacts are provided by Gly87, Gly89, Arg90, Lys110, Asp122, Gly123, Arg173, and Arg180. Asp249 (proton acceptor) is an active-site residue. Mg(2+)-binding residues include Asn250 and Asp259. Asp259 lines the ATP pocket.

The protein belongs to the SELO family. Mg(2+) is required as a cofactor. Requires Mn(2+) as cofactor.

The catalysed reaction is L-seryl-[protein] + ATP = 3-O-(5'-adenylyl)-L-seryl-[protein] + diphosphate. It carries out the reaction L-threonyl-[protein] + ATP = 3-O-(5'-adenylyl)-L-threonyl-[protein] + diphosphate. The enzyme catalyses L-tyrosyl-[protein] + ATP = O-(5'-adenylyl)-L-tyrosyl-[protein] + diphosphate. It catalyses the reaction L-histidyl-[protein] + UTP = N(tele)-(5'-uridylyl)-L-histidyl-[protein] + diphosphate. The catalysed reaction is L-seryl-[protein] + UTP = O-(5'-uridylyl)-L-seryl-[protein] + diphosphate. It carries out the reaction L-tyrosyl-[protein] + UTP = O-(5'-uridylyl)-L-tyrosyl-[protein] + diphosphate. In terms of biological role, nucleotidyltransferase involved in the post-translational modification of proteins. It can catalyze the addition of adenosine monophosphate (AMP) or uridine monophosphate (UMP) to a protein, resulting in modifications known as AMPylation and UMPylation. The polypeptide is Protein nucleotidyltransferase YdiU (Pectobacterium carotovorum subsp. carotovorum (strain PC1)).